Consider the following 389-residue polypeptide: Chorismate synthase (389 aa).

NADP(+) contacts are provided by arginine 39 and arginine 45. Residues 130–132, 251–252, glycine 296, 311–315, and arginine 338 contribute to the FMN site; these read RSS, NA, and KPIPT.

Belongs to the chorismate synthase family. In terms of assembly, homotetramer. FMNH2 serves as cofactor.

It catalyses the reaction 5-O-(1-carboxyvinyl)-3-phosphoshikimate = chorismate + phosphate. It functions in the pathway metabolic intermediate biosynthesis; chorismate biosynthesis; chorismate from D-erythrose 4-phosphate and phosphoenolpyruvate: step 7/7. Its function is as follows. Catalyzes the anti-1,4-elimination of the C-3 phosphate and the C-6 proR hydrogen from 5-enolpyruvylshikimate-3-phosphate (EPSP) to yield chorismate, which is the branch point compound that serves as the starting substrate for the three terminal pathways of aromatic amino acid biosynthesis. This reaction introduces a second double bond into the aromatic ring system. This Oceanobacillus iheyensis (strain DSM 14371 / CIP 107618 / JCM 11309 / KCTC 3954 / HTE831) protein is Chorismate synthase.